The chain runs to 266 residues: 3-methyl-2-oxobutanoate hydroxymethyltransferase (266 aa).

The Mg(2+) site is built by Asp45 and Asp84. 3-methyl-2-oxobutanoate contacts are provided by residues 45–46, Asp84, and Lys113; that span reads DS. Glu115 contributes to the Mg(2+) binding site. The active-site Proton acceptor is the Glu183.

The protein belongs to the PanB family. Homodecamer; pentamer of dimers. Mg(2+) is required as a cofactor.

The protein localises to the cytoplasm. The catalysed reaction is 3-methyl-2-oxobutanoate + (6R)-5,10-methylene-5,6,7,8-tetrahydrofolate + H2O = 2-dehydropantoate + (6S)-5,6,7,8-tetrahydrofolate. It functions in the pathway cofactor biosynthesis; (R)-pantothenate biosynthesis; (R)-pantoate from 3-methyl-2-oxobutanoate: step 1/2. In terms of biological role, catalyzes the reversible reaction in which hydroxymethyl group from 5,10-methylenetetrahydrofolate is transferred onto alpha-ketoisovalerate to form ketopantoate. The protein is 3-methyl-2-oxobutanoate hydroxymethyltransferase of Coxiella burnetii (strain Dugway 5J108-111).